The following is a 248-amino-acid chain: Probable transcriptional regulatory protein Atu3727 (248 aa).

The segment at 1-21 is disordered; sequence MAGHSQFKNIMHRKGKQDSVR.

This sequence belongs to the TACO1 family.

It localises to the cytoplasm. The chain is Probable transcriptional regulatory protein Atu3727 from Agrobacterium fabrum (strain C58 / ATCC 33970) (Agrobacterium tumefaciens (strain C58)).